A 292-amino-acid polypeptide reads, in one-letter code: Acetylglutamate kinase (292 aa).

Substrate is bound by residues glycine 60–glycine 61, arginine 82, and asparagine 187.

It belongs to the acetylglutamate kinase family. ArgB subfamily.

Its subcellular location is the cytoplasm. It catalyses the reaction N-acetyl-L-glutamate + ATP = N-acetyl-L-glutamyl 5-phosphate + ADP. It functions in the pathway amino-acid biosynthesis; L-arginine biosynthesis; N(2)-acetyl-L-ornithine from L-glutamate: step 2/4. In terms of biological role, catalyzes the ATP-dependent phosphorylation of N-acetyl-L-glutamate. In Methanobrevibacter smithii (strain ATCC 35061 / DSM 861 / OCM 144 / PS), this protein is Acetylglutamate kinase.